The following is a 164-amino-acid chain: UPF0304 protein Asuc_0543 (164 aa).

It belongs to the UPF0304 family.

The protein is UPF0304 protein Asuc_0543 of Actinobacillus succinogenes (strain ATCC 55618 / DSM 22257 / CCUG 43843 / 130Z).